Consider the following 339-residue polypeptide: UDP-glucose 4-epimerase (339 aa).

NAD(+) is bound by residues 12–13 (FI), 32–37 (DNLCNS), 59–60 (DI), 81–85 (FAGLK), N100, S125, Y150, K154, and F179. The substrate site is built by S125 and Y150. Residue Y150 is the Proton acceptor of the active site. Substrate is bound by residues N180, 200 to 201 (NL), 217 to 219 (AVF), R232, and 293 to 296 (RAGD).

Belongs to the NAD(P)-dependent epimerase/dehydratase family. As to quaternary structure, homodimer. The cofactor is NAD(+).

It catalyses the reaction UDP-alpha-D-glucose = UDP-alpha-D-galactose. It functions in the pathway carbohydrate metabolism; galactose metabolism. In terms of biological role, involved in the metabolism of galactose. Plays an essential role in the incorporation of galactose into meningococcal lipopolysaccharide surface molecules, which are important for pathogenesis. Catalyzes the conversion of UDP-galactose (UDP-Gal) to UDP-glucose (UDP-Glc) through a mechanism involving the transient reduction of NAD. The chain is UDP-glucose 4-epimerase (galE) from Neisseria meningitidis serogroup B (strain ATCC BAA-335 / MC58).